A 177-amino-acid polypeptide reads, in one-letter code: MELPPKVKNILLLDSEGKRVAVKYYSDDWPTNSAQEAFEKSVFTKTQKTNARTEVEVTALENNIVVYKFVQDLHFFVTGGEEENELILASVLEGLFDAVTLLLRSNVDKREALDNLDLIFLSFDEIIDGGIVLETDANVIAGKAGINSTDPNAPLSEQTISQALATAREHLTRSLMK.

The protein belongs to the adaptor complexes small subunit family. Oligomeric complex that consists of at least the alpha, beta, beta', gamma, delta, epsilon and zeta subunits.

It localises to the cytoplasm. The protein resides in the golgi apparatus membrane. It is found in the cytoplasmic vesicle. The protein localises to the COPI-coated vesicle membrane. Functionally, the coatomer is a cytosolic protein complex that binds to dilysine motifs and reversibly associates with Golgi non-clathrin-coated vesicles, which further mediate biosynthetic protein transport from the ER, via the Golgi up to the trans Golgi network. Coatomer complex is required for budding from Golgi membranes, and is essential for the retrograde Golgi-to-ER transport of dilysine-tagged proteins. The zeta subunit may be involved in regulating the coat assembly and, hence, the rate of biosynthetic protein transport due to its association-dissociation properties with the coatomer complex. The chain is Coatomer subunit zeta-1 from Arabidopsis thaliana (Mouse-ear cress).